Here is a 221-residue protein sequence, read N- to C-terminus: Translation initiation factor 6 (221 aa).

This sequence belongs to the eIF-6 family.

Functionally, binds to the 50S ribosomal subunit and prevents its association with the 30S ribosomal subunit to form the 70S initiation complex. This is Translation initiation factor 6 from Methanopyrus kandleri (strain AV19 / DSM 6324 / JCM 9639 / NBRC 100938).